The following is a 184-amino-acid chain: ATP synthase subunit delta (184 aa).

The protein belongs to the ATPase delta chain family. As to quaternary structure, F-type ATPases have 2 components, F(1) - the catalytic core - and F(0) - the membrane proton channel. F(1) has five subunits: alpha(3), beta(3), gamma(1), delta(1), epsilon(1). F(0) has three main subunits: a(1), b(2) and c(10-14). The alpha and beta chains form an alternating ring which encloses part of the gamma chain. F(1) is attached to F(0) by a central stalk formed by the gamma and epsilon chains, while a peripheral stalk is formed by the delta and b chains.

The protein resides in the cell membrane. In terms of biological role, f(1)F(0) ATP synthase produces ATP from ADP in the presence of a proton or sodium gradient. F-type ATPases consist of two structural domains, F(1) containing the extramembraneous catalytic core and F(0) containing the membrane proton channel, linked together by a central stalk and a peripheral stalk. During catalysis, ATP synthesis in the catalytic domain of F(1) is coupled via a rotary mechanism of the central stalk subunits to proton translocation. Functionally, this protein is part of the stalk that links CF(0) to CF(1). It either transmits conformational changes from CF(0) to CF(1) or is implicated in proton conduction. This chain is ATP synthase subunit delta, found in Bacillus licheniformis (strain ATCC 14580 / DSM 13 / JCM 2505 / CCUG 7422 / NBRC 12200 / NCIMB 9375 / NCTC 10341 / NRRL NRS-1264 / Gibson 46).